Here is a 24-residue protein sequence, read N- to C-terminus: Grammistin Gs G (24 aa).

The protein belongs to the grammistin family. Group 1 subfamily. In terms of assembly, exists as aggregates of 3-4 molecules. In terms of tissue distribution, expressed by the skin glands.

The protein resides in the secreted. Functionally, thanks to its abundant amphiphilic alpha-helices, it may integrate into membrane phospholipids, leading to lysis of the membrane. Its high hemolytic activity is inhibited by phospholipids, but not by cholesterol. Has antibacterial activity with a broad spectrum against various species of bacteria including both Gram-positive and Gram-negative groups. Also has high ichthyotoxic activity. The polypeptide is Grammistin Gs G (Grammistes sexlineatus (Goldenstriped soapfish)).